Consider the following 210-residue polypeptide: Thymidylate kinase (210 aa).

Residue 16-23 participates in ATP binding; the sequence is GGDGVGKS.

It belongs to the thymidylate kinase family.

The catalysed reaction is dTMP + ATP = dTDP + ADP. Phosphorylation of dTMP to form dTDP in both de novo and salvage pathways of dTTP synthesis. This is Thymidylate kinase from Leifsonia xyli subsp. xyli (strain CTCB07).